The chain runs to 3391 residues: MNNQRKKARNTPFNMLKRERNRVSTVQQLTKRFSLGMLQGRGPLKLFMALVAFLRFLTIPPTAGILKRWGTIKKSKAINVLRGFRKEIGRMLNILNRRRRTAGMIIMLIPTVMAFHLTTRNGEPHMIVSRQEKGKSLLFKTEDGVNMCTLMAMDLGELCEDTITYKCPFLKQNEPEDIDCWCNSTSTWVTYGTCTTTGEHRREKRSVALVPHVGMGLETRTETWMSSEGAWKHAQRIETWILRHPGFTIMAAILAYTIGTTHFQRALIFILLTAVAPSMTMRCIGISNRDFVEGVSGGSWVDIVLEHGSCVTTMAKNKPTLDFELIETEAKQPATLRKYCIEAKLTNTTTDSRCPTQGEPSLNEEQDKRFVCKHSMVDRGWGNGCGLFGKGGIVTCAMFTCKKNMKGKVVQPENLEYTIVITPHSGEEHAVGNDTGKHGKEIKITPQSSITEAELTGYGTVTMECSPRTGLDFNEMVLLQMENKAWLVHRQWFLDLPLPWLPGADTQGSNWIQKETLVTFKNPHAKKQDVVVLGSQEGAMHTALTGATEIQMSSGNLLFTGHLKCRLRMDKLQLKGMSYSMCTGKFKVVKEIAETQHGTIVIRVQYEGDGSPCKIPFEIMDLEKRHVLGRLITVNPIVTEKDSPVNIEAEPPFGDSYIIIGVEPGQLKLNWFKKGSSIGQMIETTMRGAKRMAILGDTAWDFGSLGGVFTSIGKALHQVFGAIYGAAFSGVSWIMKILIGVIITWIGMNSRSTSLSVSLVLVGVVTLYLGVMVQADSGCVVSWKNKELKCGSGIFITDNVHTWTEQYKFQPESPSKLASAIQKAHEEGICGIRSVTRLENLMWKQITPELNHILSENEVKLTIMTGDIKGIMQAGKRSLQPQPTELKYSWKTWGKAKMLSTESHNQTFLIDGPETAECPNTNRAWNSLEVEDYGFGVFTTNIWLKLREKQDVFCDSKLMSAAIKDNRAVHADMGYWIESALNDTWKIEKASFIEVKSCHWPKSHTLWSNGVLESEMIIPKNFAGPVSQHNYRPGYHTQTAGPWHLGKLEMDFDFCEGTTVVVTEDCGNRGPSLRTTTASGKLITEWCCRSCTLPPLRYRGEDGCWYGMEIRPLKEKEENLVNSLVTAGHGQIDNFSLGVLGMALFLEEMLRTRVGTKHAILLVAVSFVTLITGNMSFRDLGRVMVMVGATMTDDIGMGVTYLALLAAFKVRPTFAAGLLLRKLTSKELMMTTIGIVLLSQSTIPETILELTDALALGMMVLKMVRKMEKYQLAVTIMAILCVPNAVILQNAWKVSCTILAVVSVSPLFLTSSQQKADWIPLALTIKGLNPTAIFLTTLSRTNKKRSWPLNEAIMAVGMVSILASSLLKNDIPMTGPLVAGGLLTVCYVLTGRSADLELERAADVKWEDQAEISGSSPILSITISEDGSMSIKNEEEEQTLTILIRTGLLVISGLFPVSIPITAAAWYLWEVKKQRAGVLWDVPSPPPVGKAELEDGAYRIKQKGILGYSQIGAGVYKEGTFHTMWHVTRGAVLMHKGKRIEPSWADVKKDLISYGGGWKLEGEWKEGEEVQVLALEPGKNPRAVQTKPGLFKTNAGTIGAVSLDFSPGTSGSPIIDKKGKVVGLYGNGVVTRSGAYVSAIAQTEKSIEDNPEIEDDIFRKRKLTIMDLHPGAGKTKRYLPAIVREAIKRGLRTLILAPTRVVAAEMEEALRGLPIRYQTPAIRAEHTGREIVDLMCHATFTMRLLSPVRVPNYNLIIMDEAHFTDPASIAARGYISTRVEMGEAAGIFMTATPPGSRDPFPQSNAPIMDEEREIPERSWSSGHEWVTDFKGKTVWFVPSIKAGNDIAACLRKNGKKVIQLSRKTFDSEYVKTRTNDWDFVVTTDISEMGANFKAERVIDPRRCMKPVILTDGEERVILAGPMPVTHSSAAQRRGRIGRNPKNENDQYIYMGEPLENDEDCAHWKEAKMLLDNINTPEGIIPSMFEPEREKVDAIDGEYRLRGEARKTFVDLMRRGDLPVWLAYRVAAEGINYADRRWCFDGIKNNQILEENVEVEIWTKEGERKKLKPRWLDAKIYSDPLALKEFKEFAAGRKSLTLNLITEMGRLPTFMTQKARDALDNLAVLHTAEAGGRAYNHALSELPETLETLLLLTLLATVTGGIFLFLMSGRGIGKMTLGMCCIITASILLWYAQIQPHWIAASIILEFFLIVLLIPEPEKQRTPQDNQLTYVVIAILTVVAATMANEMGFLEKTKKDLGLGSITTQQPESNILDIDLRPASAWTLYAVATTFVTPMLRHSIENSSVNVSLTAIANQATVLMGLGKGWPLSKMDIGVPLLAIGCYSQVNPITLTAALFLLVAHYAIIGPGLQAKATREAQKRAAAGIMKNPTVDGITVIDLDPIPYDPKFEKQLGQVMLLVLCVTQVLMMRTTWALCEALTLATGPISTLWEGNPGRFWNTTIAVSMANIFRGSYLAGAGLLFSIMKNTTNTRRGTGNIGETLGEKWKSRLNALGKSEFQIYKKSGIQEVDRTLAKEGIKRGETDHHAVSRGSAKLRWFVERNMVTPEGKVVDLGCGRGGWSYYCGGLKNVREVKGLTKGGPGHEEPIPMSTYGWNLVRLQSGVDVFFTPPEKCDTLLCDIGESSPNPTVEAGRTLRVLNLVENWLNNNTQFCIKVLNPYMPSVIEKMEALQRKYGGALVRNPLSRNSTHEMYWLSNASGNIVSSVNMISRMLINRFTMRHKKATYEPDVDLGSGTRNIGIESEIPNLDIIGKRIEKIKQEHETSWHYDQDHPYKTWAYHGSYETKQTGSASSMGNGVVRLLTKPWDVVPMVTQMAMTDTTPFGQQRVFKEKVDTRTQEPKEGTKKLMKITAEWLWKELGKKKTPRMCTREEFTRKVRSNAALGAIFTDENKWKSAREAVEDSRFWELVDKERNLHLEGKCETCVYNMMGKREKKLGEFGKAKGSRAIWYMWLGARFLEFEALGFLNEDHWFSRENSLSGVEGEGLHKLGYILRDVSKKEGGAMYADDTAGWDTRITLEDLKNEEMVTNHMEGEHKKLAEAIFKLTYQNKVVRVQRPTPRGTVMDIISRRDQRGSGQVGTYGLNTFTNMEAQLIRQMEGEGVFKSIQHLTVTEEIAVQNWLARVGRERLSRMAISGDDCVVKPLDDRFASALTALNDMGKVRKDIQQWEPSRGWNDWTQVPFCSHHFHELIMKDGRVLVVPCRNQDELIGRARISQGAGWSLRETACLGKSYAQMWSLMYFHRRDLRLAANAICSAVPSHWVPTSRTTWSIHAKHEWMTTEDMLTVWNRVWIQENPWMEDKTPVESWEEIPYLGKREDQWCGSLIGLTSRATWAKNIQTAINQVRSLIGNEEYTDYMPSMKRFRKEEEEAGVLW.

The tract at residues methionine 1–methionine 15 is interaction with host EXOC1. Residues methionine 1–threonine 101 are Cytoplasmic-facing. The hydrophobic; homodimerization of capsid protein C stretch occupies residues methionine 37–isoleucine 72. Positions threonine 101–alanine 114 are cleaved as a propeptide — ER anchor for the capsid protein C, removed in mature form by serine protease NS3. Residues alanine 102–glycine 122 form a helical membrane-spanning segment. Residues glutamate 123–glutamate 238 lie on the Extracellular side of the membrane. N-linked (GlcNAc...) asparagine; by host glycosylation occurs at asparagine 183. Residues threonine 239 to glycine 259 form a helical membrane-spanning segment. Residues threonine 260–arginine 265 are Cytoplasmic-facing. A helical membrane pass occupies residues alanine 266 to threonine 280. At methionine 281 to glycine 725 the chain is on the extracellular side. Intrachain disulfides connect cysteine 283–cysteine 310, cysteine 340–cysteine 401, cysteine 354–cysteine 385, and cysteine 372–cysteine 396. Asparagine 347 carries an N-linked (GlcNAc...) asparagine; by host glycan. The segment at aspartate 378–glycine 391 is fusion peptide. The N-linked (GlcNAc...) asparagine; by host glycan is linked to asparagine 433. 2 disulfide bridges follow: cysteine 465/cysteine 565 and cysteine 582/cysteine 613. The chain crosses the membrane as a helical span at residues alanine 726–isoleucine 746. Residues glycine 747–serine 752 lie on the Cytoplasmic side of the membrane. A helical membrane pass occupies residues threonine 753 to valine 773. Residues glutamine 774 to isoleucine 1195 are Extracellular-facing. 6 cysteine pairs are disulfide-bonded: cysteine 779-cysteine 790, cysteine 830-cysteine 918, cysteine 954-cysteine 998, cysteine 1055-cysteine 1104, cysteine 1066-cysteine 1088, and cysteine 1087-cysteine 1091. 2 N-linked (GlcNAc...) asparagine; by host glycosylation sites follow: asparagine 905 and asparagine 982. The helical transmembrane segment at glycine 1196–leucine 1220 threads the bilayer. Over arginine 1221–lysine 1226 the chain is Cytoplasmic. The helical transmembrane segment at glutamate 1227–glutamate 1245 threads the bilayer. Over threonine 1246–lysine 1269 the chain is Lumenal. A helical transmembrane segment spans residues tyrosine 1270–asparagine 1290. Residue alanine 1291 is a topological domain, cytoplasmic. The helical transmembrane segment at tryptophan 1292 to threonine 1310 threads the bilayer. The Lumenal portion of the chain corresponds to serine 1311–aspartate 1317. The chain crosses the membrane as a helical span at residues tryptophan 1318–leucine 1338. The Cytoplasmic segment spans residues serine 1339 to serine 1346. Residues tryptophan 1347 to leucine 1367 form a helical membrane-spanning segment. At lysine 1368 to aspartate 1370 the chain is on the lumenal side. The chain crosses the membrane as a helical span at residues isoleucine 1371 to glycine 1391. Residues arginine 1392–glycine 1447 are Cytoplasmic-facing. The interval leucine 1398–glutamate 1437 is interacts with and activates NS3 protease. Positions leucine 1448–leucine 1468 form an intramembrane region, helical. Residues tryptophan 1469–threonine 2147 lie on the Cytoplasmic side of the membrane. In terms of domain architecture, Peptidase S7 spans alanine 1476–isoleucine 1653. Active-site charge relay system; for serine protease NS3 activity residues include histidine 1526, aspartate 1550, and serine 1610. The 157-residue stretch at aspartate 1655 to glutamate 1811 folds into the Helicase ATP-binding domain. An important for RNA-binding region spans residues arginine 1659–lysine 1662. Residue leucine 1668–threonine 1675 participates in ATP binding. A DEAH box motif is present at residues aspartate 1759–histidine 1762. The Helicase C-terminal domain maps to serine 1821–arginine 1988. Lysine 1863 carries the N6-acetyllysine; by host modification. A helical transmembrane segment spans residues leucine 2148–glycine 2168. The Lumenal segment spans residues arginine 2169 to glycine 2170. The helical intramembrane region spans isoleucine 2171–alanine 2191. Position 2192 (glutamine 2192) is a topological domain, lumenal. The helical transmembrane segment at isoleucine 2193–isoleucine 2213 threads the bilayer. Residues proline 2214–threonine 2228 are Cytoplasmic-facing. Residues tyrosine 2229–leucine 2249 form a helical membrane-spanning segment. Over glutamate 2250–aspartate 2274 the chain is Lumenal. An intramembrane region (helical) is located at residues leucine 2275 to leucine 2295. The Lumenal segment spans residues arginine 2296 to threonine 2316. N-linked (GlcNAc...) asparagine; by host glycans are attached at residues asparagine 2301 and asparagine 2305. The segment at residues valine 2317 to leucine 2337 is an intramembrane region (helical). Residues alanine 2338 to proline 2347 lie on the Lumenal side of the membrane. A helical transmembrane segment spans residues isoleucine 2348 to leucine 2368. At glutamine 2369 to glutamine 2413 the chain is on the cytoplasmic side. The helical transmembrane segment at valine 2414–cysteine 2434 threads the bilayer. Residues glutamate 2435 to threonine 2459 lie on the Lumenal side of the membrane. Residue asparagine 2457 is glycosylated (N-linked (GlcNAc...) asparagine; by host). The helical transmembrane segment at isoleucine 2460 to phenylalanine 2480 threads the bilayer. Residues serine 2481–tryptophan 3391 lie on the Cytoplasmic side of the membrane. The mRNA cap 0-1 NS5-type MT domain maps to threonine 2493–asparagine 2755. Serine 2547 lines the S-adenosyl-L-methionine pocket. Serine 2547 bears the Phosphoserine mark. The active-site For 2'-O-MTase activity is lysine 2552. The SUMO-interacting motif signature appears at valine 2568–leucine 2571. Residues glycine 2577, tryptophan 2578, threonine 2595, lysine 2596, aspartate 2622, and valine 2623 each coordinate S-adenosyl-L-methionine. Aspartate 2637 serves as the catalytic For 2'-O-MTase activity. S-adenosyl-L-methionine is bound at residue isoleucine 2638. Active-site for 2'-O-MTase activity residues include lysine 2672 and glutamate 2708. Residue tyrosine 2710 coordinates S-adenosyl-L-methionine. 4 residues coordinate Zn(2+): glutamate 2929, histidine 2933, cysteine 2938, and cysteine 2941. One can recognise a RdRp catalytic domain in the interval glycine 3019 to alanine 3168. Residues histidine 3203, cysteine 3219, and cysteine 3338 each coordinate Zn(2+).

In the N-terminal section; belongs to the class I-like SAM-binding methyltransferase superfamily. mRNA cap 0-1 NS5-type methyltransferase family. In terms of assembly, homodimer. Interacts (via N-terminus) with host EXOC1 (via C-terminus); this interaction results in EXOC1 degradation through the proteasome degradation pathway. As to quaternary structure, forms heterodimers with envelope protein E in the endoplasmic reticulum and Golgi. Homodimer; in the endoplasmic reticulum and Golgi. Interacts with protein prM. Interacts with non-structural protein 1. In terms of assembly, homodimer; Homohexamer when secreted. Interacts with envelope protein E. Interacts with host PRKAA1. As to quaternary structure, interacts (via N-terminus) with serine protease NS3. Forms a heterodimer with serine protease NS3. May form homooligomers. In terms of assembly, forms a heterodimer with NS2B. Interacts with NS4B. Interacts with unphosphorylated RNA-directed RNA polymerase NS5; this interaction stimulates RNA-directed RNA polymerase NS5 guanylyltransferase activity. Interacts with host SHFL. As to quaternary structure, interacts with host MAVS; this interaction inhibits the synthesis of IFN-beta. Interacts with host MAVS; this interaction inhibits the synthesis of IFN-beta. Interacts with host SHFL. Interacts with host AUP1; the interaction occurs in the presence of Dengue virus NS4B and induces lipophagy which facilitates production of virus progeny particles. May interact with host SRPRA and SEC61G. Interacts with serine protease NS. In terms of assembly, homodimer. Interacts with host STAT2; this interaction inhibits the phosphorylation of the latter, and, when all viral proteins are present (polyprotein), targets STAT2 for degradation. Interacts with serine protease NS3. Interacts with host PAF1 complex; the interaction may prevent the recruitment of the PAF1 complex to interferon-responsive genes, and thus reduces the immune response. Specific enzymatic cleavages in vivo yield mature proteins. Cleavages in the lumen of endoplasmic reticulum are performed by host signal peptidase, whereas cleavages in the cytoplasmic side are performed by serine protease NS3. Signal cleavage at the 2K-4B site requires a prior NS3 protease-mediated cleavage at the 4A-2K site. In terms of processing, cleaved in post-Golgi vesicles by a host furin, releasing the mature small envelope protein M, and peptide pr. This cleavage is incomplete as up to 30% of viral particles still carry uncleaved prM. Post-translationally, N-glycosylated. N-glycosylated. The excreted form is glycosylated and this is required for efficient secretion of the protein from infected cells. In terms of processing, acetylated by host KAT5. Acetylation modulates NS3 RNA-binding and unwinding activities and plays an important positive role for viral replication. Post-translationally, sumoylation of RNA-directed RNA polymerase NS5 increases NS5 protein stability allowing proper viral RNA replication. Phosphorylated on serines residues. This phosphorylation may trigger NS5 nuclear localization.

The protein resides in the virion. It localises to the host nucleus. Its subcellular location is the host cytoplasm. The protein localises to the host perinuclear region. It is found in the secreted. The protein resides in the virion membrane. It localises to the host endoplasmic reticulum membrane. Its subcellular location is the host mitochondrion. It catalyses the reaction Selective hydrolysis of -Xaa-Xaa-|-Yaa- bonds in which each of the Xaa can be either Arg or Lys and Yaa can be either Ser or Ala.. The enzyme catalyses RNA(n) + a ribonucleoside 5'-triphosphate = RNA(n+1) + diphosphate. It carries out the reaction a ribonucleoside 5'-triphosphate + H2O = a ribonucleoside 5'-diphosphate + phosphate + H(+). The catalysed reaction is ATP + H2O = ADP + phosphate + H(+). It catalyses the reaction a 5'-end (5'-triphosphoguanosine)-ribonucleoside in mRNA + S-adenosyl-L-methionine = a 5'-end (N(7)-methyl 5'-triphosphoguanosine)-ribonucleoside in mRNA + S-adenosyl-L-homocysteine. The enzyme catalyses a 5'-end (N(7)-methyl 5'-triphosphoguanosine)-ribonucleoside in mRNA + S-adenosyl-L-methionine = a 5'-end (N(7)-methyl 5'-triphosphoguanosine)-(2'-O-methyl-ribonucleoside) in mRNA + S-adenosyl-L-homocysteine + H(+). Its function is as follows. Plays a role in virus budding by binding to the cell membrane and gathering the viral RNA into a nucleocapsid that forms the core of a mature virus particle. During virus entry, may induce genome penetration into the host cytoplasm after hemifusion induced by the surface proteins. Can migrate to the cell nucleus where it modulates host functions. Overcomes the anti-viral effects of host EXOC1 by sequestering and degrading the latter through the proteasome degradation pathway. In terms of biological role, inhibits RNA silencing by interfering with host Dicer. Prevents premature fusion activity of envelope proteins in trans-Golgi by binding to envelope protein E at pH6.0. After virion release in extracellular space, gets dissociated from E dimers. Functionally, acts as a chaperone for envelope protein E during intracellular virion assembly by masking and inactivating envelope protein E fusion peptide. prM is the only viral peptide matured by host furin in the trans-Golgi network probably to avoid catastrophic activation of the viral fusion activity in acidic Golgi compartment prior to virion release. prM-E cleavage is inefficient, and many virions are only partially matured. These uncleaved prM would play a role in immune evasion. Its function is as follows. May play a role in virus budding. Exerts cytotoxic effects by activating a mitochondrial apoptotic pathway through M ectodomain. May display a viroporin activity. In terms of biological role, binds to host cell surface receptor and mediates fusion between viral and cellular membranes. Envelope protein is synthesized in the endoplasmic reticulum in the form of heterodimer with protein prM. They play a role in virion budding in the ER, and the newly formed immature particle is covered with 60 spikes composed of heterodimer between precursor prM and envelope protein E. The virion is transported to the Golgi apparatus where the low pH causes dissociation of PrM-E heterodimers and formation of E homodimers. prM-E cleavage is inefficient, and many virions are only partially matured. These uncleaved prM would play a role in immune evasion. Involved in immune evasion, pathogenesis and viral replication. Once cleaved off the polyprotein, is targeted to three destinations: the viral replication cycle, the plasma membrane and the extracellular compartment. Essential for viral replication. Required for formation of the replication complex and recruitment of other non-structural proteins to the ER-derived membrane structures. Excreted as a hexameric lipoparticle that plays a role against host immune response. Antagonizing the complement function. Binds to the host macrophages and dendritic cells. Inhibits signal transduction originating from Toll-like receptor 3 (TLR3). Mediates complement activation, which may contribute to the pathogenesis of the vascular leakage that occurs in severe dengue disease. Activates autophagy through the AMPK/ERK/mTOR signaling pathway. Mechanistically, acts as the assembly platform for STK11-AMPK interactions and promotes STK11-AMPK interactions. In turn, promotes phosphorylation of the AMPK kinase structural domain and activates AMPK, thereby positively regulating the AMPK/ERK/mTOR signaling pathway and inducing autophagy. Functionally, disrupts the host endothelial glycocalyx layer of host pulmonary microvascular endothelial cells, inducing degradation of sialic acid and shedding of heparan sulfate proteoglycans. NS1 induces expression of sialidases, heparanase, and activates cathepsin L, which activates heparanase via enzymatic cleavage. These effects are probably linked to the endothelial hyperpermeability observed in severe dengue disease. Its function is as follows. Component of the viral RNA replication complex that functions in virion assembly and antagonizes the host immune response. In terms of biological role, required cofactor for the serine protease function of NS3. May have membrane-destabilizing activity and form viroporins. Displays three enzymatic activities: serine protease, NTPase and RNA helicase. NS3 serine protease, in association with NS2B, performs its autocleavage and cleaves the polyprotein at dibasic sites in the cytoplasm: C-prM, NS2A-NS2B, NS2B-NS3, NS3-NS4A, NS4A-2K and NS4B-NS5. NS3 RNA helicase binds RNA and unwinds dsRNA in the 3' to 5' direction. Functionally, regulates the ATPase activity of the NS3 helicase activity. NS4A allows NS3 helicase to conserve energy during unwinding. Plays a role in the inhibition of the host innate immune response. Interacts with host MAVS and thereby prevents the interaction between RIGI and MAVS. In turn, IFN-beta production is impaired. Interacts with host AUP1 which mediates induction of lipophagy in host cells and facilitates production of virus progeny particles. Its function is as follows. Functions as a signal peptide for NS4B and is required for the interferon antagonism activity of the latter. In terms of biological role, induces the formation of ER-derived membrane vesicles where the viral replication takes place. Inhibits interferon (IFN)-induced host STAT1 phosphorylation and nuclear translocation, thereby preventing the establishment of cellular antiviral state by blocking the IFN-alpha/beta pathway. Replicates the viral (+) and (-) RNA genome, and performs the capping of genomes in the cytoplasm. NS5 methylates viral RNA cap at guanine N-7 and ribose 2'-O positions. Besides its role in RNA genome replication, also prevents the establishment of cellular antiviral state by blocking the interferon-alpha/beta (IFN-alpha/beta) signaling pathway. Inhibits host TYK2 and STAT2 phosphorylation, thereby preventing activation of JAK-STAT signaling pathway. May reduce immune responses by preventing the recruitment of the host PAF1 complex to interferon-responsive genes. The polypeptide is Genome polyprotein (Aedimorphus (Red guenon)).